A 248-amino-acid polypeptide reads, in one-letter code: 3-deoxy-manno-octulosonate cytidylyltransferase (248 aa).

Belongs to the KdsB family.

The protein resides in the cytoplasm. The catalysed reaction is 3-deoxy-alpha-D-manno-oct-2-ulosonate + CTP = CMP-3-deoxy-beta-D-manno-octulosonate + diphosphate. It functions in the pathway nucleotide-sugar biosynthesis; CMP-3-deoxy-D-manno-octulosonate biosynthesis; CMP-3-deoxy-D-manno-octulosonate from 3-deoxy-D-manno-octulosonate and CTP: step 1/1. The protein operates within bacterial outer membrane biogenesis; lipopolysaccharide biosynthesis. Functionally, activates KDO (a required 8-carbon sugar) for incorporation into bacterial lipopolysaccharide in Gram-negative bacteria. The sequence is that of 3-deoxy-manno-octulosonate cytidylyltransferase from Chlorobaculum parvum (strain DSM 263 / NCIMB 8327) (Chlorobium vibrioforme subsp. thiosulfatophilum).